A 192-amino-acid polypeptide reads, in one-letter code: Probable thymidylate kinase (192 aa).

An ATP-binding site is contributed by 8-15 (GIDGSGKS).

The protein belongs to the thymidylate kinase family.

The enzyme catalyses dTMP + ATP = dTDP + ADP. This is Probable thymidylate kinase from Pyrobaculum aerophilum (strain ATCC 51768 / DSM 7523 / JCM 9630 / CIP 104966 / NBRC 100827 / IM2).